A 778-amino-acid polypeptide reads, in one-letter code: Acyl-homoserine lactone acylase PvdQ (778 aa).

The signal sequence occupies residues 1–25; sequence MTISRQFTGLTLAGLFLGLSLSAQA. Residues 196–218 constitute a propeptide, spacer peptide; sequence IENNARAYQLADTRLQRFALDRG. Ser-219 serves as the catalytic Nucleophile.

It belongs to the peptidase S45 family. In terms of assembly, heterodimer of an alpha subunit and a beta subunit processed from the same precursor.

It is found in the periplasm. It carries out the reaction an N-acyl-L-homoserine lactone + H2O = L-homoserine lactone + a carboxylate. Its function is as follows. Catalyzes the deacylation of acyl-homoserine lactone (AHL or acyl-HSL), releasing homoserine lactone (HSL) and the corresponding fatty acid. Possesses a specificity for the degradation of long-chain acyl-HSLs (side chains of 11 to 14 carbons in length). This chain is Acyl-homoserine lactone acylase PvdQ (pvdQ), found in Pseudomonas fluorescens (strain Pf0-1).